Consider the following 101-residue polypeptide: Small ribosomal subunit protein bS21 (101 aa).

The segment covering 36–52 has biased composition (basic and acidic residues); that stretch reads YEKPSEKKAREKAEAVR. Residues 36–101 form a disordered region; that stretch reads YEKPSEKKAR…GPGAGPRGPR (66 aa). Residues 53–62 are compositionally biased toward basic residues; sequence RARKLARKKL. Over residues 83 to 101 the composition is skewed to gly residues; that stretch reads PGAGGPGAGGPGAGPRGPR.

It belongs to the bacterial ribosomal protein bS21 family.

In Rhodopseudomonas palustris (strain HaA2), this protein is Small ribosomal subunit protein bS21.